Consider the following 161-residue polypeptide: Peptidyl-prolyl cis-trans isomerase-like 3 (161 aa).

Serine 2 carries the N-acetylserine modification. In terms of domain architecture, PPIase cyclophilin-type spans 2–154 (SVTLHTDVGD…NDVHIKDITI (153 aa)). Arginine 61 carries the post-translational modification Omega-N-methylarginine.

The protein belongs to the cyclophilin-type PPIase family. PPIL3 subfamily. Identified in the spliceosome C complex.

The catalysed reaction is [protein]-peptidylproline (omega=180) = [protein]-peptidylproline (omega=0). Functionally, PPIases accelerate the folding of proteins. It catalyzes the cis-trans isomerization of proline imidic peptide bonds in oligopeptides. May be involved in pre-mRNA splicing. The chain is Peptidyl-prolyl cis-trans isomerase-like 3 (Ppil3) from Mus musculus (Mouse).